The primary structure comprises 167 residues: 2-amino-4-hydroxy-6-hydroxymethyldihydropteridine pyrophosphokinase (167 aa).

Belongs to the HPPK family.

The catalysed reaction is 6-hydroxymethyl-7,8-dihydropterin + ATP = (7,8-dihydropterin-6-yl)methyl diphosphate + AMP + H(+). The protein operates within cofactor biosynthesis; tetrahydrofolate biosynthesis; 2-amino-4-hydroxy-6-hydroxymethyl-7,8-dihydropteridine diphosphate from 7,8-dihydroneopterin triphosphate: step 4/4. Catalyzes the transfer of pyrophosphate from adenosine triphosphate (ATP) to 6-hydroxymethyl-7,8-dihydropterin, an enzymatic step in folate biosynthesis pathway. The sequence is that of 2-amino-4-hydroxy-6-hydroxymethyldihydropteridine pyrophosphokinase (folK) from Bacillus subtilis (strain 168).